The chain runs to 490 residues: Betaine aldehyde dehydrogenase (490 aa).

The K(+) site is built by T26, I27, and D93. Residue 150–152 coordinates NAD(+); the sequence is GAW. The Charge relay system role is filled by K162. 176–179 lines the NAD(+) pocket; the sequence is KPSE. Residue V180 coordinates K(+). NAD(+) is bound at residue 230–233; sequence GVAS. L246 is a K(+) binding site. The Proton acceptor role is filled by E252. NAD(+) contacts are provided by G254, C286, and E387. Residue C286 is the Nucleophile of the active site. Residue C286 is modified to Cysteine sulfenic acid (-SOH). K(+) contacts are provided by K457 and G460. The active-site Charge relay system is the E464.

The protein belongs to the aldehyde dehydrogenase family. Dimer of dimers. The cofactor is K(+).

It carries out the reaction betaine aldehyde + NAD(+) + H2O = glycine betaine + NADH + 2 H(+). It participates in amine and polyamine biosynthesis; betaine biosynthesis via choline pathway; betaine from betaine aldehyde: step 1/1. Functionally, involved in the biosynthesis of the osmoprotectant glycine betaine. Catalyzes the irreversible oxidation of betaine aldehyde to the corresponding acid. This chain is Betaine aldehyde dehydrogenase, found in Escherichia coli O139:H28 (strain E24377A / ETEC).